A 412-amino-acid polypeptide reads, in one-letter code: cAMP-dependent protein kinase regulatory subunit (412 aa).

The segment covering 1-11 has biased composition (polar residues); it reads MSNYSHSSNNP. The segment at 1–146 is disordered; that stretch reads MSNYSHSSNN…TPPSHPKSEE (146 aa). Residues 16–29 show a composition bias toward basic and acidic residues; the sequence is STKEDKPSSFHKIA. A dimerization and phosphorylation region spans residues 23-159; the sequence is SSFHKIAEDE…RLKTAVSNNF (137 aa). Polar residues-rich tracts occupy residues 49-60 and 119-138; these read NADNSAGGNNPL and TSVS…SWTP. Position 120 is a phosphoserine (Ser-120). Residues 160 to 291, Glu-238, Arg-247, 292 to 405, Glu-359, and Arg-368 each bind 3',5'-cyclic AMP; these read LFSH…EEVP and LLSS…TEYS.

This sequence belongs to the cAMP-dependent kinase regulatory chain family. Tetramer, composed of 2 regulatory (R) and 2 catalytic (C) subunits. In the presence of cAMP it dissociates into 2 active monomeric C subunits and an R dimer.

In Emericella nidulans (strain FGSC A4 / ATCC 38163 / CBS 112.46 / NRRL 194 / M139) (Aspergillus nidulans), this protein is cAMP-dependent protein kinase regulatory subunit (pkaR).